We begin with the raw amino-acid sequence, 136 residues long: MGSETLSVIQVRLRNIYDNDKVALLKITCHTNRLILLTHTLAKSVIHTIKLSGIVFIHIITSSDYCPTSDIINSANFTSMPILQNGGYIWELMELTHCFQTNGLIDDNCEITFSKRLSDSELAKYSNQLSTLLGLN.

It belongs to the pneumovirus non-structural protein 1 family. As to quaternary structure, monomer. Homomultimer. Heteromultimer with NS2. Interacts with the matrix protein M. Interacts with host ELOC and CUL2; this interaction allows NS1 to form an active E3 ligase with ELOC and CUL2. Interacts with host IRF3; this interaction leads to the disrupted association of IRF3 with CREBBP and thus reduced binding of IRF3 to the IFN-beta promoter. Interacts with host MAVS; this interaction prevents MAVS binding to RIGI and inhibits signaling pathway leading to interferon production. Interacts with host TRIM25 (via SPRY domain); this interaction suppresses RIGI ubiquitination and results in decreased interaction between RIGI and MAVS.

The protein resides in the host cytoplasm. The protein localises to the host mitochondrion. It is found in the host nucleus. Plays a major role in antagonizing the type I IFN-mediated antiviral response by degrading or inhibiting multiple cellular factors required for either IFN induction or response pathways. Acts cooperatively with NS2 to repress activation and nuclear translocation of host IFN-regulatory factor IRF3. Also disrupts the association of IRF3 with CREBBP. Interacts with host mitochondrial-associated membrane (MAM) MAVS and prevents the interaction with RIGI. Interacts with TRIM25 to suppress TRIM25-mediated RIGI ubiquitination and thereby RIGI-MAVS interaction. Together with NS2, participates in the proteasomal degradation of host STAT2, IRF3, IRF7, TBK1 and RIGI through a NS-degradasome involving CUL2 and Elongin-C. The degradasome requires an intact mitochondrial MAVS. Decreases the levels of host TRAF3 and IKBKE/IKK-epsilon. As functions other than disruptions of the type I IFN-mediated antiviral signaling pathways, induces host SOCS1 and SOCS3 expression. Suppresses premature apoptosis by an NF-kappa-B-dependent, interferon-independent mechanism and thus facilitates virus growth. Additionally, NS1 may serve some inhibitory role in viral transcription and RNA replication. Suppresses proliferation and activation of host CD103+ CD8+ cytotoxic T-lymphocytes and Th17 helper T-lymphocytes. The chain is Non-structural protein 1 (1C) from Bos taurus (Bovine).